The following is a 336-amino-acid chain: Fructose-1,6-bisphosphatase class 1 (336 aa).

Mg(2+) contacts are provided by E90, D112, L114, and D115. Residues 115–118, N211, and K277 each bind substrate; that span reads DGSS. Mg(2+) is bound at residue E283.

Belongs to the FBPase class 1 family. Homotetramer. Mg(2+) is required as a cofactor.

It localises to the cytoplasm. It catalyses the reaction beta-D-fructose 1,6-bisphosphate + H2O = beta-D-fructose 6-phosphate + phosphate. Its pathway is carbohydrate biosynthesis; gluconeogenesis. The chain is Fructose-1,6-bisphosphatase class 1 from Pseudomonas aeruginosa (strain ATCC 15692 / DSM 22644 / CIP 104116 / JCM 14847 / LMG 12228 / 1C / PRS 101 / PAO1).